Here is a 376-residue protein sequence, read N- to C-terminus: Polar flagellin A (376 aa).

Coiled-coil stretches lie at residues 103 to 128 (SNSKAERVAIQEEVTALNDELNRIAE) and 310 to 338 (FQNRFNHAISNLDNINENVNASNSRIKDT).

This sequence belongs to the bacterial flagellin family. As to quaternary structure, heteromer of multiple flagellin subunits including FlaA, FlaB/D, FlaC, FlaE and FlaF.

It localises to the secreted. It is found in the bacterial flagellum. Flagellin is the subunit protein which polymerizes to form the filaments of bacterial flagella. FlaA is not essential for polar flagellar synthesis and swimming motility. Homomer of FlaA is able to form a functional filament. The polypeptide is Polar flagellin A (flaA) (Vibrio parahaemolyticus serotype O3:K6 (strain RIMD 2210633)).